Consider the following 386-residue polypeptide: Succinate--CoA ligase [ADP-forming] subunit beta (386 aa).

In terms of domain architecture, ATP-grasp spans Lys-9–Leu-244. ATP contacts are provided by residues Lys-46, Gly-53–Gly-55, Val-102, and Glu-107. Mg(2+) contacts are provided by Asn-199 and Asp-213. Residues Asn-264 and Gly-321 to Met-323 each bind substrate.

The protein belongs to the succinate/malate CoA ligase beta subunit family. In terms of assembly, heterotetramer of two alpha and two beta subunits. Requires Mg(2+) as cofactor.

The enzyme catalyses succinate + ATP + CoA = succinyl-CoA + ADP + phosphate. It catalyses the reaction GTP + succinate + CoA = succinyl-CoA + GDP + phosphate. It participates in carbohydrate metabolism; tricarboxylic acid cycle; succinate from succinyl-CoA (ligase route): step 1/1. Functionally, succinyl-CoA synthetase functions in the citric acid cycle (TCA), coupling the hydrolysis of succinyl-CoA to the synthesis of either ATP or GTP and thus represents the only step of substrate-level phosphorylation in the TCA. The beta subunit provides nucleotide specificity of the enzyme and binds the substrate succinate, while the binding sites for coenzyme A and phosphate are found in the alpha subunit. The polypeptide is Succinate--CoA ligase [ADP-forming] subunit beta (Chlamydia trachomatis serovar L2 (strain ATCC VR-902B / DSM 19102 / 434/Bu)).